The following is a 701-amino-acid chain: Elongation factor G (701 aa).

The 283-residue stretch at 8–290 folds into the tr-type G domain; sequence SLYRNIGISA…AVVELLPAPT (283 aa). GTP contacts are provided by residues 17-24, 88-92, and 142-145; these read AHIDAGKT, DTPGH, and NKMD.

Belongs to the TRAFAC class translation factor GTPase superfamily. Classic translation factor GTPase family. EF-G/EF-2 subfamily.

It localises to the cytoplasm. Catalyzes the GTP-dependent ribosomal translocation step during translation elongation. During this step, the ribosome changes from the pre-translocational (PRE) to the post-translocational (POST) state as the newly formed A-site-bound peptidyl-tRNA and P-site-bound deacylated tRNA move to the P and E sites, respectively. Catalyzes the coordinated movement of the two tRNA molecules, the mRNA and conformational changes in the ribosome. This chain is Elongation factor G, found in Neisseria meningitidis serogroup C (strain 053442).